A 156-amino-acid polypeptide reads, in one-letter code: Small ribosomal subunit protein uS7 (156 aa).

Belongs to the universal ribosomal protein uS7 family. As to quaternary structure, part of the 30S ribosomal subunit. Contacts proteins S9 and S11.

Functionally, one of the primary rRNA binding proteins, it binds directly to 16S rRNA where it nucleates assembly of the head domain of the 30S subunit. Is located at the subunit interface close to the decoding center, probably blocks exit of the E-site tRNA. The protein is Small ribosomal subunit protein uS7 of Sinorhizobium medicae (strain WSM419) (Ensifer medicae).